We begin with the raw amino-acid sequence, 190 residues long: Photosynthetic NDH subunit of lumenal location 2, chloroplastic (190 aa).

A chloroplast-targeting transit peptide spans 1 to 31; sequence MSSFTTTNTPPPYLLRKIYHRRVNQPFSVVC. The N-terminal 37 residues, 32–68, are a transit peptide targeting the thylakoid; the sequence is CTGEPQQDIFTRRRTLTSLITFTVIGGATSSALAQEK. Coiled-coil stretches lie at residues 87–107 and 139–159; these read EDAA…REML and ESRR…MSEL.

It belongs to the PsbQ family. As to quaternary structure, part of the chloroplast NDH complex, composed of a mixture of chloroplast and nucleus encoded subunits. Component of the NDH lumenal subcomplex, at least composed of PnsL1, PnsL2, PnsL3, PnsL4 and PnsL5.

It localises to the plastid. The protein resides in the chloroplast thylakoid membrane. NDH shuttles electrons from NAD(P)H:plastoquinone, via FMN and iron-sulfur (Fe-S) centers, to quinones in the photosynthetic chain and possibly in a chloroplast respiratory chain. The immediate electron acceptor for the enzyme in this species is believed to be plastoquinone. Couples the redox reaction to proton translocation, and thus conserves the redox energy in a proton gradient. Required for both formation and activity of the chloroplast NAD(P)H dehydrogenase (NDH) complex. The protein is Photosynthetic NDH subunit of lumenal location 2, chloroplastic of Arabidopsis thaliana (Mouse-ear cress).